Here is a 313-residue protein sequence, read N- to C-terminus: Ornithine carbamoyltransferase (313 aa).

Residues 61 to 64 (STRT), Gln88, Arg112, and 139 to 142 (HPCQ) each bind carbamoyl phosphate. L-ornithine-binding positions include Asn170, Asp228, and 232-233 (SM). Residues 268–269 (CL) and Arg296 each bind carbamoyl phosphate.

It belongs to the aspartate/ornithine carbamoyltransferase superfamily. OTCase family.

The protein localises to the cytoplasm. The enzyme catalyses carbamoyl phosphate + L-ornithine = L-citrulline + phosphate + H(+). It functions in the pathway amino-acid biosynthesis; L-arginine biosynthesis; L-arginine from L-ornithine and carbamoyl phosphate: step 1/3. Reversibly catalyzes the transfer of the carbamoyl group from carbamoyl phosphate (CP) to the N(epsilon) atom of ornithine (ORN) to produce L-citrulline. The protein is Ornithine carbamoyltransferase of Bordetella avium (strain 197N).